The sequence spans 507 residues: Histidine ammonia-lyase (507 aa).

A cross-link (5-imidazolinone (Ala-Gly)) is located at residues 141 to 143 (ASG). Serine 142 is subject to 2,3-didehydroalanine (Ser).

The protein belongs to the PAL/histidase family. Contains an active site 4-methylidene-imidazol-5-one (MIO), which is formed autocatalytically by cyclization and dehydration of residues Ala-Ser-Gly.

The protein resides in the cytoplasm. It carries out the reaction L-histidine = trans-urocanate + NH4(+). It participates in amino-acid degradation; L-histidine degradation into L-glutamate; N-formimidoyl-L-glutamate from L-histidine: step 1/3. This Burkholderia cenocepacia (strain HI2424) protein is Histidine ammonia-lyase.